The chain runs to 508 residues: Serine/threonine-protein kinase VRK2 (508 aa).

Residues 29 to 319 (WVLGKKIGSG…KKILNPHGIP (291 aa)) enclose the Protein kinase domain. ATP is bound by residues 35 to 43 (IGSGGFGLI) and Lys-61. Asp-166 (proton acceptor) is an active-site residue. The residue at position 336 (Thr-336) is a Phosphothreonine. Residues 397–508 (TRRRQKYQES…MLVFLALFFL (112 aa)) are interaction with MAP3K7. The residue at position 406 (Ser-406) is a Phosphoserine. A helical; Anchor for type IV membrane protein transmembrane segment spans residues 487–507 (VYYYRIIIPVLLMLVFLALFF).

Belongs to the protein kinase superfamily. CK1 Ser/Thr protein kinase family. VRK subfamily. In terms of assembly, isoform 1 interacts with MAP3K7, MAP2K7, MAP2K1 and KSR1. Isoform 1 and isoform 2 interact with RAN and MAPK8IP1. As to quaternary structure, (Microbial infection) Isoform 1 interacts with Epstein-Barr virus BHRF1; this interaction is involved in protecting cells from apoptosis. (Microbial infection) Isoform 1 interacts with vaccinia protein B12. Autophosphorylated. Isoform 1 and isoform 2 are expressed in various tumor cell lines. Expression of isoform 1 inversely correlates with ERBB2 in breast carcinomas (at protein level). Widely expressed. Highly expressed in fetal liver, skeletal muscle, pancreas, heart, peripheral blood leukocytes and testis.

The protein resides in the cytoplasm. Its subcellular location is the endoplasmic reticulum membrane. It localises to the mitochondrion membrane. It is found in the nucleus envelope. The protein localises to the nucleus. The enzyme catalyses L-seryl-[protein] + ATP = O-phospho-L-seryl-[protein] + ADP + H(+). It catalyses the reaction L-threonyl-[protein] + ATP = O-phospho-L-threonyl-[protein] + ADP + H(+). Its activity is regulated as follows. RAN inhibits its autophosphorylation and its ability to phosphorylate histone H3. Functionally, serine/threonine kinase that regulates several signal transduction pathways. Isoform 1 modulates the stress response to hypoxia and cytokines, such as interleukin-1 beta (IL1B) and this is dependent on its interaction with MAPK8IP1, which assembles mitogen-activated protein kinase (MAPK) complexes. Inhibition of signal transmission mediated by the assembly of MAPK8IP1-MAPK complexes reduces JNK phosphorylation and JUN-dependent transcription. Phosphorylates 'Thr-18' of p53/TP53, histone H3, and may also phosphorylate MAPK8IP1. Phosphorylates BANF1 and disrupts its ability to bind DNA and reduces its binding to LEM domain-containing proteins. Down-regulates the transactivation of transcription induced by ERBB2, HRAS, BRAF, and MEK1. Blocks the phosphorylation of ERK in response to ERBB2 and HRAS. Can also phosphorylate the following substrates that are commonly used to establish in vitro kinase activity: casein, MBP and histone H2B, but it is not sure that this is physiologically relevant. Phosphorylates 'Thr-18' of p53/TP53, as well as histone H3. Reduces p53/TP53 ubiquitination by MDM2, promotes p53/TP53 acetylation by EP300 and thereby increases p53/TP53 stability and activity. The polypeptide is Serine/threonine-protein kinase VRK2 (VRK2) (Homo sapiens (Human)).